The primary structure comprises 414 residues: Serine hydroxymethyltransferase (414 aa).

(6S)-5,6,7,8-tetrahydrofolate-binding positions include leucine 116 and 120 to 122; that span reads GHL. Lysine 224 carries the N6-(pyridoxal phosphate)lysine modification. Residue 348–350 coordinates (6S)-5,6,7,8-tetrahydrofolate; the sequence is SPF.

Belongs to the SHMT family. As to quaternary structure, homodimer. Pyridoxal 5'-phosphate serves as cofactor.

It localises to the cytoplasm. It catalyses the reaction (6R)-5,10-methylene-5,6,7,8-tetrahydrofolate + glycine + H2O = (6S)-5,6,7,8-tetrahydrofolate + L-serine. The protein operates within one-carbon metabolism; tetrahydrofolate interconversion. It participates in amino-acid biosynthesis; glycine biosynthesis; glycine from L-serine: step 1/1. In terms of biological role, catalyzes the reversible interconversion of serine and glycine with tetrahydrofolate (THF) serving as the one-carbon carrier. This reaction serves as the major source of one-carbon groups required for the biosynthesis of purines, thymidylate, methionine, and other important biomolecules. Also exhibits THF-independent aldolase activity toward beta-hydroxyamino acids, producing glycine and aldehydes, via a retro-aldol mechanism. This is Serine hydroxymethyltransferase from Campylobacter jejuni subsp. doylei (strain ATCC BAA-1458 / RM4099 / 269.97).